The primary structure comprises 107 residues: MDLNNRLTEDETLEQAYDIFLELAGDNLDPADILLFNLQFEERGGAELFDPAEDWQEHVDFDVNPDFFAEVVIGLADSDGEEINDVFARVLLCREKDHKLCHILWKE.

Belongs to the putative dsDNA mimic protein family.

Its function is as follows. May act as a double-stranded DNA (dsDNA) mimic. Probably regulates the activity of a dsDNA-binding protein. The sequence is that of Putative double-stranded DNA mimic protein YE2228 from Yersinia enterocolitica serotype O:8 / biotype 1B (strain NCTC 13174 / 8081).